Here is a 99-residue protein sequence, read N- to C-terminus: Aspartyl/glutamyl-tRNA(Asn/Gln) amidotransferase subunit C (99 aa).

The protein belongs to the GatC family. In terms of assembly, heterotrimer of A, B and C subunits.

The enzyme catalyses L-glutamyl-tRNA(Gln) + L-glutamine + ATP + H2O = L-glutaminyl-tRNA(Gln) + L-glutamate + ADP + phosphate + H(+). It carries out the reaction L-aspartyl-tRNA(Asn) + L-glutamine + ATP + H2O = L-asparaginyl-tRNA(Asn) + L-glutamate + ADP + phosphate + 2 H(+). Its function is as follows. Allows the formation of correctly charged Asn-tRNA(Asn) or Gln-tRNA(Gln) through the transamidation of misacylated Asp-tRNA(Asn) or Glu-tRNA(Gln) in organisms which lack either or both of asparaginyl-tRNA or glutaminyl-tRNA synthetases. The reaction takes place in the presence of glutamine and ATP through an activated phospho-Asp-tRNA(Asn) or phospho-Glu-tRNA(Gln). This chain is Aspartyl/glutamyl-tRNA(Asn/Gln) amidotransferase subunit C, found in Variovorax paradoxus (strain S110).